Consider the following 401-residue polypeptide: SVP1-like protein 2 (401 aa).

2 WD repeats span residues 222 to 262 (AHKN…LIHE) and 267 to 306 (LDRA…DKRH).

The protein belongs to the WD repeat PROPPIN family.

It is found in the vacuole membrane. Its subcellular location is the cytoplasmic vesicle membrane. Involved in mitochondrial or peroxisomal functions and amino acid signaling pathways. The protein is SVP1-like protein 2 (HSV2) of Eremothecium gossypii (strain ATCC 10895 / CBS 109.51 / FGSC 9923 / NRRL Y-1056) (Yeast).